We begin with the raw amino-acid sequence, 178 residues long: CASP-like protein 2A2 (178 aa).

Topologically, residues 1-22 (MDKTDQTAIDGSALELNRTEKT) are cytoplasmic. A helical transmembrane segment spans residues 23 to 43 (VEAVLRVASMALSITGLVIMI). The Extracellular portion of the chain corresponds to 44–69 (KNSISNDFGSLSYSNLGAFMYLVGAN). Residues 70–90 (GVCAAYSLLSALAILALPCPI) traverse the membrane as a helical segment. Residues 91–96 (SKVQVR) are Cytoplasmic-facing. Residues 97 to 117 (TLFLLDQVVTYVVLAAGAVSA) form a helical membrane-spanning segment. Topologically, residues 118–145 (ETVYLAYYGNIPITWSSACDSYGIFCHK) are extracellular. The helical transmembrane segment at 146–166 (ALISVVFTFVVSLLYMLLSLI) threads the bilayer. The Cytoplasmic segment spans residues 167–178 (SSYRLFSRFEAP).

The protein belongs to the Casparian strip membrane proteins (CASP) family. In terms of assembly, homodimer and heterodimers.

It is found in the cell membrane. This chain is CASP-like protein 2A2, found in Arabidopsis lyrata subsp. lyrata (Lyre-leaved rock-cress).